Reading from the N-terminus, the 372-residue chain is Beta-1,3-N-acetylglucosaminyltransferase radical fringe (372 aa).

Over M1–R10 the chain is Cytoplasmic. Residues T11–L27 traverse the membrane as a helical; Signal-anchor for type II membrane protein segment. At P28–S372 the chain is on the lumenal side. Residues G30 to P48 are compositionally biased toward pro residues. The segment at G30–S96 is disordered. Gly residues predominate over residues D64 to V78. A substrate-binding site is contributed by R120. N159 carries an N-linked (GlcNAc...) asparagine glycan. Disulfide bonds link C160–C171 and C189–C253. D193 lines the substrate pocket. D194 is a binding site for Mn(2+). The active site involves D283. H307 contributes to the Mn(2+) binding site. C357 and C366 are disulfide-bonded.

The protein belongs to the glycosyltransferase 31 family. Requires Mn(2+) as cofactor.

It is found in the golgi apparatus membrane. The enzyme catalyses 3-O-(alpha-L-fucosyl)-L-threonyl-[EGF-like domain protein] + UDP-N-acetyl-alpha-D-glucosamine = 3-O-(N-acetyl-beta-D-glucosaminyl-(1-&gt;3)-alpha-L-fucosyl)-L-threonyl-[EGF-like domain protein] + UDP + H(+). It catalyses the reaction 3-O-(alpha-L-fucosyl)-L-seryl-[EGF-like domain protein] + UDP-N-acetyl-alpha-D-glucosamine = 3-O-(N-acetyl-beta-D-glucosaminyl-(1-&gt;3)-alpha-L-fucosyl)-L-seryl-[EGF-like domain protein] + UDP + H(+). Glycosyltransferase that initiates the elongation of O-linked fucose residues attached to EGF-like repeats in the extracellular domain of Notch molecules. Plays an important role in limb outgrowth, it directs the formation and positioning of the apical ectodermal ridge (AER), one of the key organizer centers of vertebrate limb development. This Gallus gallus (Chicken) protein is Beta-1,3-N-acetylglucosaminyltransferase radical fringe (RFNG).